The sequence spans 311 residues: Aquaporin-1 (311 aa).

Over 1–16 (MHPQVASLFDNVYEDL) the chain is Cytoplasmic. A helical membrane pass occupies residues 17 to 37 (AAATLEFIGTAFFLLFGLGGI). The Extracellular segment spans residues 38-56 (QASTAEDTASSQPPASGIE). A helical membrane pass occupies residues 57-77 (HVLYISTCMGFSLVVSAWLFF). Arginine 78 is a topological domain (cytoplasmic). The helical transmembrane segment at 79–99 (VTGGLFNPNISFALLLVGGLK) threads the bilayer. Positions 85–87 (NPN) match the NPA 1 motif. Residue proline 100 is a topological domain, extracellular. The chain crosses the membrane as a helical span at residues 101-121 (LRFVLFCIAQLTGAIAGAAIV). Topologically, residues 122 to 143 (RGLTSAPLSVNNVLQQGTSAAQ) are cytoplasmic. The helical transmembrane segment at 144–164 (GVFIEMFITAALVLSVLMLAA) threads the bilayer. Residues 165–168 (EKHE) are Extracellular-facing. The chain crosses the membrane as a helical span at residues 169-189 (ATPFAPVGIGLTLFACHLFAV). Over 190–215 (YYTGAAMNSARAFGPAVISGFPEPQH) the chain is Cytoplasmic. Residues 197–199 (NSA) carry the NPA 2 motif. The helical transmembrane segment at 216–236 (WVYWVGPFLGSLLGAGFYATL) threads the bilayer. Over 237–311 (KHYKYWRLNP…TSSRTNFSPV (75 aa)) the chain is Extracellular. Residues 276 to 311 (DEETRNGCASNEEGVRATGDEKSSNATSSRTNFSPV) are disordered. Residues 288-298 (EGVRATGDEKS) are compositionally biased toward basic and acidic residues. Residues 299 to 311 (SNATSSRTNFSPV) are compositionally biased toward polar residues. An N-linked (GlcNAc...) asparagine glycan is attached at asparagine 300.

Belongs to the MIP/aquaporin (TC 1.A.8) family.

Its subcellular location is the cell membrane. The catalysed reaction is H2O(in) = H2O(out). The enzyme catalyses H2O2(out) = H2O2(in). It catalyses the reaction nitric oxide(out) = nitric oxide(in). It carries out the reaction CO2(out) = CO2(in). Its function is as follows. Water channel required to facilitate the transport of water across membranes. Also mediates the transport nitric oxide, hydrogen peroxide and carbon dioxide across the membrane. Required for Hartig net development in trembling aspen trees. Contributes in fungal cellular processes during the basidiocarp formation. The sequence is that of Aquaporin-1 from Laccaria bicolor (Bicoloured deceiver).